Consider the following 1905-residue polypeptide: Tudor domain-containing 6-like (1905 aa).

Tudor domains follow at residues 1–30 (MVEVYFIDHGNTEMVDWYNVKKLPAELREM), 215–279 (YERG…LFDL), and 435–491 (SVTP…AYEL). The tract at residues 564 to 795 (SRAEGSFGNS…SKLTPPLSKL (232 aa)) is disordered. Basic and acidic residues predominate over residues 573-591 (SEKRNQLNDLDRGGRKETT). The segment covering 592–602 (SKFQPYSQGSK) has biased composition (polar residues). A compositionally biased stretch (basic and acidic residues) spans 622–631 (FQTKEREQFE). 2 stretches are compositionally biased toward polar residues: residues 651–660 (VQKNMSQSGF) and 687–704 (LYSQGRETPSMSQNSSYS). Basic and acidic residues predominate over residues 715-726 (RSKERQVSEHKQ). 2 stretches are compositionally biased toward polar residues: residues 746-766 (KASQNGSSSQTEAFWSSGSDQ) and 774-787 (NASQQRRSTFQESK). 2 Tudor domains span residues 853 to 910 (YVNL…LLSI) and 1060 to 1118 (EIEV…IAAI). Disordered stretches follow at residues 1213–1245 (IEDNVIPSQADEDDHSEPSEEPCASESIETPAV), 1449–1599 (EDFE…TETE), 1655–1682 (VEDLDTENQESQICISGSDNRSKESGPV), and 1827–1905 (ESPA…APSV). Acidic residues-rich tracts occupy residues 1491-1500 (EAEGLEDQDQ) and 1522-1535 (EQAEDLVPEEDPGT). Positions 1553–1588 (SQEHKDFPEQEEDRVAEHKNDISEPDLQSKEQKEDL) are enriched in basic and acidic residues. Polar residues predominate over residues 1663 to 1673 (QESQICISGSD). Residues 1876–1887 (FEPETDDMEQME) show a composition bias toward acidic residues.

As to quaternary structure, interacts with FRGY2 (a component of messenger ribonucleoprotein (mRNP) particle) during germ cell development. As to expression, expressed in testis.

It localises to the cytoplasm. In terms of biological role, tudor domain-containing protein involved in germ cell development, more specifically the formation of chromatoid body (during spermiogenesis), Balbiani body (during oogenesis), germ plasm (upon fertilization), and for proper miRNA expression and spliceosome maturation. Component of cytoplasmic mRNP particle through interaction with FRGY2, and binds to maternal mRNA related to cell cycle (RCC1, RHAMM, INCENP-A, MAD2L1, HELLS) and a germ plasm specific mRNA (Dead end/Dnd1), it is proposed a role in translational activation of the maternal mRNAs repressed in mRNP particle. The polypeptide is Tudor domain-containing 6-like (Xenopus laevis (African clawed frog)).